Consider the following 330-residue polypeptide: MSKVSFIGGGSFGTALAILLAEKGNTVSIYNRDKKVVDDININRRNDKYIKNLEILSNIKAFDNLEKATENTEYIVLAIPSHTIRSICKQLKSKIKQETIIISIAKGIEEHTDKRLSEVIKEELNNPIVVLSGPSHAEEVVLKLPTTLVVSSENMNSASEVQNLFMTSFFRVYTNQDLVGVEVGGAVKNIIALAAGILDGLGYGDNTKAALMTRGMKEISRIGSALGGREETFYGLTGMGDLIVTCTSNHSRNRKAGLLIGSGMGVDKAIKEIGMVVEGVKACKAFYELKEKIGVSMPITDILYKVLFEKKDPKLGIEELMLREKKSEIF.

S11, F12, R32, and K106 together coordinate NADPH. Sn-glycerol 3-phosphate-binding residues include K106, G133, and S135. A137 contributes to the NADPH binding site. Residues K188, D241, S251, R252, and N253 each contribute to the sn-glycerol 3-phosphate site. Residue K188 is the Proton acceptor of the active site. NADPH is bound at residue R252. NADPH is bound by residues V276 and E278.

Belongs to the NAD-dependent glycerol-3-phosphate dehydrogenase family.

The protein resides in the cytoplasm. The catalysed reaction is sn-glycerol 3-phosphate + NAD(+) = dihydroxyacetone phosphate + NADH + H(+). The enzyme catalyses sn-glycerol 3-phosphate + NADP(+) = dihydroxyacetone phosphate + NADPH + H(+). Its pathway is membrane lipid metabolism; glycerophospholipid metabolism. Its function is as follows. Catalyzes the reduction of the glycolytic intermediate dihydroxyacetone phosphate (DHAP) to sn-glycerol 3-phosphate (G3P), the key precursor for phospholipid synthesis. This is Glycerol-3-phosphate dehydrogenase [NAD(P)+] from Clostridium botulinum (strain Eklund 17B / Type B).